The sequence spans 804 residues: Probable replication endonuclease from prophage-like region 2 (804 aa).

Residues Tyr503 and Tyr507 each act as O-(5'-phospho-DNA)-tyrosine intermediate in the active site.

This sequence belongs to the phage GPA family.

In terms of biological role, possible endonuclease which induces a single-strand cut and initiates DNA replication. This is Probable replication endonuclease from prophage-like region 2 from Salmonella typhi.